We begin with the raw amino-acid sequence, 430 residues long: CinA-like protein (430 aa).

Belongs to the CinA family.

In Prochlorococcus marinus (strain NATL2A), this protein is CinA-like protein.